A 30-amino-acid chain; its full sequence is Bacteriocin plantaricin KL-1Y (30 aa).

Its subcellular location is the secreted. In terms of biological role, bacteriocin with activity against species of Lactobacillus, Lactococcus, Pediococcus, Leuconostoc and against B.subtilis and, to a lesser extent, against B.coagulans, B.cereus and species of Enterococcus, Listeria, Kocuria, Staphylococcus, Corynebacterium, Salmonella, Pseudomonas and Escherichia. The chain is Bacteriocin plantaricin KL-1Y from Lactiplantibacillus plantarum (Lactobacillus plantarum).